Here is a 291-residue protein sequence, read N- to C-terminus: ATP synthase gamma chain (291 aa).

This sequence belongs to the ATPase gamma chain family. As to quaternary structure, F-type ATPases have 2 components, CF(1) - the catalytic core - and CF(0) - the membrane proton channel. CF(1) has five subunits: alpha(3), beta(3), gamma(1), delta(1), epsilon(1). CF(0) has three main subunits: a, b and c.

The protein localises to the cell inner membrane. Its function is as follows. Produces ATP from ADP in the presence of a proton gradient across the membrane. The gamma chain is believed to be important in regulating ATPase activity and the flow of protons through the CF(0) complex. The polypeptide is ATP synthase gamma chain (Ruegeria pomeroyi (strain ATCC 700808 / DSM 15171 / DSS-3) (Silicibacter pomeroyi)).